Reading from the N-terminus, the 118-residue chain is Large ribosomal subunit protein uL24 (118 aa).

It belongs to the universal ribosomal protein uL24 family. Part of the 50S ribosomal subunit.

Functionally, one of two assembly initiator proteins, it binds directly to the 5'-end of the 23S rRNA, where it nucleates assembly of the 50S subunit. In terms of biological role, one of the proteins that surrounds the polypeptide exit tunnel on the outside of the subunit. The chain is Large ribosomal subunit protein uL24 from Prochlorococcus marinus (strain MIT 9301).